The following is a 316-amino-acid chain: Ribosomal RNA small subunit methyltransferase H (316 aa).

Residues glycine 35–histidine 37, aspartate 55, phenylalanine 79, aspartate 101, and glutamine 108 contribute to the S-adenosyl-L-methionine site.

The protein belongs to the methyltransferase superfamily. RsmH family.

It localises to the cytoplasm. It carries out the reaction cytidine(1402) in 16S rRNA + S-adenosyl-L-methionine = N(4)-methylcytidine(1402) in 16S rRNA + S-adenosyl-L-homocysteine + H(+). Specifically methylates the N4 position of cytidine in position 1402 (C1402) of 16S rRNA. The polypeptide is Ribosomal RNA small subunit methyltransferase H (Vibrio campbellii (strain ATCC BAA-1116)).